An 89-amino-acid chain; its full sequence is Small ribosomal subunit protein uS17 (89 aa).

Belongs to the universal ribosomal protein uS17 family. As to quaternary structure, part of the 30S ribosomal subunit.

One of the primary rRNA binding proteins, it binds specifically to the 5'-end of 16S ribosomal RNA. In Coxiella burnetii (strain Dugway 5J108-111), this protein is Small ribosomal subunit protein uS17.